We begin with the raw amino-acid sequence, 323 residues long: SURF1-like protein (323 aa).

The segment covering 57-71 (DAPKSRENREKDGGK) has biased composition (basic and acidic residues). Residues 57–76 (DAPKSRENREKDGGKSKKSK) form a disordered region. 2 helical membrane passes run 81 to 101 (WSTG…LGIW) and 299 to 319 (HLNY…MWIH).

The protein belongs to the SURF1 family.

Its subcellular location is the mitochondrion inner membrane. Probably involved in the biogenesis of the COX complex. The chain is SURF1-like protein (sft-1) from Caenorhabditis elegans.